The sequence spans 366 residues: L-Ala-D/L-Glu epimerase (366 aa).

R24, T135, and K160 together coordinate substrate. K162 serves as the catalytic Proton acceptor; specific for (R)-substrate epimerization. Residues D191, E219, and D244 each coordinate Mg(2+). The active-site Proton acceptor; specific for (S)-substrate epimerization is the K268. S296, I298, D321, and D323 together coordinate substrate.

Belongs to the mandelate racemase/muconate lactonizing enzyme family. In terms of assembly, homooctamer; tetramer of dimers. The cofactor is Mg(2+).

The enzyme catalyses L-alanyl-L-glutamate = L-alanyl-D-glutamate. It functions in the pathway cell wall degradation; peptidoglycan degradation. Functionally, catalyzes the epimerization of L-Ala-D-Glu to L-Ala-L-Glu and has probably a role in the metabolism of the murein peptide, of which L-Ala-D-Glu is a component. Is also able to catalyze the reverse reaction and the epimerization of the other Ala-X dipeptides L-Ala-L-Asp, L-Ala-L-Leu, L-Ala-L-Met, and L-Ala-L-Ser. Is not able to epimerize other L-Ala-X dipeptides. Is also active with L-Ser-L-Glu and, oddly, L-Pro-L-Glu, but not with L-Glu-L-Glu, L-Lys-L-Glu, L-Lys-L-Ala, or D-Ala-D-Ala. This is L-Ala-D/L-Glu epimerase (ykfB) from Bacillus subtilis (strain 168).